The chain runs to 131 residues: Glycine cleavage system H protein (131 aa).

A Lipoyl-binding domain is found at R24–E106. The residue at position 65 (K65) is an N6-lipoyllysine.

The protein belongs to the GcvH family. In terms of assembly, the glycine cleavage system is composed of four proteins: P, T, L and H. (R)-lipoate serves as cofactor.

In terms of biological role, the glycine cleavage system catalyzes the degradation of glycine. The H protein shuttles the methylamine group of glycine from the P protein to the T protein. The sequence is that of Glycine cleavage system H protein from Xylella fastidiosa (strain 9a5c).